A 148-amino-acid chain; its full sequence is Cytochrome c-552 (148 aa).

An N-terminal signal peptide occupies residues 1-17; the sequence is MKRTLMAFLLLGGLALA. Glutamine 18 is subject to Pyrrolidone carboxylic acid. Positions 28, 31, 32, and 86 each coordinate heme c.

Post-translationally, binds 1 heme c group covalently per subunit.

In terms of biological role, this monoheme basic protein appears to function as an electron donor to cytochrome oxidase in T.thermophilus. In Thermus thermophilus (strain ATCC 27634 / DSM 579 / HB8), this protein is Cytochrome c-552 (cycA).